We begin with the raw amino-acid sequence, 266 residues long: Putative pyruvate, phosphate dikinase regulatory protein (266 aa).

Position 147–154 (147–154 (GLSRTSKT)) interacts with ADP.

The protein belongs to the pyruvate, phosphate/water dikinase regulatory protein family. PDRP subfamily.

The catalysed reaction is N(tele)-phospho-L-histidyl/L-threonyl-[pyruvate, phosphate dikinase] + ADP = N(tele)-phospho-L-histidyl/O-phospho-L-threonyl-[pyruvate, phosphate dikinase] + AMP + H(+). The enzyme catalyses N(tele)-phospho-L-histidyl/O-phospho-L-threonyl-[pyruvate, phosphate dikinase] + phosphate + H(+) = N(tele)-phospho-L-histidyl/L-threonyl-[pyruvate, phosphate dikinase] + diphosphate. Functionally, bifunctional serine/threonine kinase and phosphorylase involved in the regulation of the pyruvate, phosphate dikinase (PPDK) by catalyzing its phosphorylation/dephosphorylation. In Clostridium perfringens (strain 13 / Type A), this protein is Putative pyruvate, phosphate dikinase regulatory protein.